The following is a 2191-amino-acid chain: MHSPGCTGPKAQWFLLLQLLLLHLDRVSATFISINRGLRVMKGSSAFLSGDHLRVAVPKEKDACRLEVVMNEPVTQRVGKLSPQVFDCHFLPNEVKYVHNGCPILDEDSVKLRLYRFTETDTFMETFLLRVYLVEPDCNIIRMSSNVLEVTEFYGLSQAIDKNLLQFDYDRTASLDCTIRLDPLRTQLPAHGKLVVVNRKSEGPRGDQPHSFFSETELGAGLKCPDGSCALELKQVASLKVSCEEFLLTGFHYQHMQPPSPNIDYIPIQLDLTDRRSKTVYKSESAWLPVYIRVGIPNQVPRAAFMAMFVLEVDQFILTPLTTSVLDCEEDETPKPLLVFNITKAPLQGYVTHLLDHTRPISSFTWKDLSDMQVAYQPPNSSHPERRHYTMELEVYDFFFERSAPITVHISIRTADTNAPRVSWNTGLNLLEGQSRAITWEQFQIVDNDDIGAVQLVTIGGLQHGRLTVREGKGFLFTVTDLQAGVVRYHHDDSDTTKDFVAFRIFDGHHSSHHKFPINILPKDDSPPFLITNVVIELEEGKTILIQGSMLRASDMDSSDDYIFFNITKFPQAGEIMKKPGPRLIGYPVPGFLQRDLFSGIIYYRHFGGEIFEDSFEFVLWDSHEPPNLSVPQVVTIHITPVDDQLPKEAPGISRHLVVKETEVAYITKKHLHFLDMESRDGELIYTVTRPPCFSFSHRHLDAGKLFMVDSIPKLTKNPTAPGLSSFTQGLILISANQHTCSSQFASQHAVNHMKVAYMPPMQDIGPSPRHVQFTVSVSNQHGGALHGICFNITVLPVDNQVPEVFTNTLRVVEGGQCTISTEHILVSDVDTPLDSISLSLKERPLHGGVELDGFPLNPRGTFSWRDLNTLKVWYQHDGSEVLQDEIFLEVTDGTNSAAFVLHIEVFPVNDEPPILKADLIPMMHCSEGGEVTITPEYISATDADSDDLELLFLIAREPQHGVVRKAGLHVDRFSQGDVISGAVTYKHTGGEIGLEPCSDTVVLVVSDGEADPLMNGCCYDGPDSSVPLHKSFPTYQLNITVHPVDNQPPSIIIGRMLTVDEGFSAALTTHHLTVVDWDTAPDDLKFMLASQPQFGYLENALPSAGFEKSNIGIRIASFQWTDMKASHINYVQSRHLRVEPTADQFTVYATDGKHRSLETTFHVIINPTNDEAPDLAVQNITVYEGHMVELDSSIISATDRDIPKDPLLFSIALKPQHGLLVDAAISKDSHQIKQLQHEIHSFSVDLLKNGMKLVYAHDDSESSADNFVIQLSDGKHKILKTISVNITPVNDETPTLSKKAEISMAVGDTRVLSSAVLSATDKDSPREKIHYVFERLPQNGQLQLKIGRDWVPLSTGMQCTQEDVDLNLLRYTHAGKTDSQDGDSFTFYLWDEDNRSPAFDCHIIIEDMGKGDIVIHAKPLVVVKGDRGLLTTATLLAVDGADKPEELLYLITSPPRHGQVEYVHSPGVPIASFSQMDIAGQTVCYIHKSRTAVPTDSFRFTISNGLQTQRGVFEITLQTVDSALPVLTKNKRLRLAEGAMGLLSADHLQLTDPDTPPENLTFFLAQLPRHGYLFLRGKALQHNFTQRDVDSGGVAYQHSGGGAREDYFTFLATDRKNQGFVVDGKVQKEPVRFTIQVDQLDKAAPRITHLHSPTQVGLLKNGCYGIYITSRVLKASDPDTEDDQIIFKILRGPLYGRLENTTTGEFIHERFSQKDLSHKTILYIINPSLQVTSDILEFQAMDPTGNTATPQSLDLRWSYIEWAQTAYEVCENVGLLPLEVTRRGYPMDSAFVGVEVNQVSATVGKDFTVTPSKLLQFDPGMSTKMWNIAITYDGLEEDDEVFEVILNSPVNAVLGTQTKAAVKILDSKGGRCHPSNSFNQSKHSTWGKGPWHPLPSGSSSLTTSGSPLLERPPPSFTSGDALQGFGLTDLTQRKTMTQGNGKSVLPSSVCRNGTDTIYNYHGIVSLKLEGDRFSAHKRKAKISIVSQPQRTIKVAELPLADKVESTTDLHFLRQGLRPLFPKNCSVDLKGLFHFEESTHRLYQCDGISWKAWSPQTKGLEDRSCPGGWLLHSGYCHILVTRQKGTWTTATRACREQHQGDLVTVLSRRHMQWLWAMSGRKPFWIGLKNQPRTGHWEWIGGEPVAFTNWRRGAPLHPKPGKNCALVQKRGQWQTKNCSKGKAHNFVCSRKL.

Positions 1–29 (MHSPGCTGPKAQWFLLLQLLLLHLDRVSA) are cleaved as a signal peptide. The Cell attachment site motif lies at 205-207 (RGD). 3 CSPG repeats span residues 300 to 394 (VPRA…MELE), 419 to 506 (APRV…FRIF), and 527 to 621 (PPFL…FVLW). N-linked (GlcNAc...) asparagine glycosylation is present at Asn341. N-linked (GlcNAc...) asparagine glycans are attached at residues Asn566 and Asn628. CSPG repeat units lie at residues 648–779 (KEAP…VSVS), 801–892 (QVPE…LEVT), and 912–1007 (EPPI…LVVS). N-linked (GlcNAc...) asparagine glycosylation occurs at Asn1039. 6 CSPG repeats span residues 1049–1151 (PPSI…VYAT), 1172–1273 (EAPD…IQLS), 1294–1391 (TPTL…FYLW), 1412–1504 (GDIV…FTIS), 1525–1614 (LPVL…FLAT), and 1650–1742 (HLHS…FQAM). An N-linked (GlcNAc...) asparagine glycan is attached at Asn1180. The N-linked (GlcNAc...) asparagine glycan is linked to Asn1584. Positions 1749-1848 (ATPQSLDLRW…DDEVFEVILN (100 aa)) constitute a Calx-beta domain. The segment at 1874-1921 (HPSNSFNQSKHSTWGKGPWHPLPSGSSSLTTSGSPLLERPPPSFTSGD) is disordered. The segment covering 1875-1885 (PSNSFNQSKHS) has biased composition (polar residues). The span at 1895–1910 (LPSGSSSLTTSGSPLL) shows a compositional bias: low complexity. The 115-residue stretch at 2072 to 2186 (HSGYCHILVT…CSKGKAHNFV (115 aa)) folds into the C-type lectin domain. Residues Cys2163 and Cys2177 are joined by a disulfide bond.

The protein belongs to the FRAS1 family. In terms of assembly, interacts with FREM2. As to expression, expressed in epidermis and hair follicles. Expressed in many developing epidermal appendages, including the whisker and sensory vibrissae, cranial and trunk hair follicles, meibomian glands, teeth, footpads, eyelash primordia and invaginating mammary glands. Limb expression localizes to sheets of dermal cells on the apical and basal surfaces of the digits but, unlike FRAS1, is excluded from the apical ectodermal ridge. Usually expressed at higher level in dermal cells underlying the differentiating epithelial components, especially underlying the epidermis of the head, limbs, and eyelids. Expression in the eyelid dermis is apparent as early as 13 dpc. Postnatal expression in the skin is limited to the dermal papillae. In the kidney, it is expressed from 12.5 dpc in the mesenchyme surrounding the branching ureteric tree, with a strong expression in the more proximal regions of these tubules rather than at the proliferating and branching ends of the ureteric buds. In hair follicle, it is selectively expressed in the vibrissal hair primordia during development. Preferentially expressed in the whisker pad epithelia of 12.5 dpc embryos, in both the epithelial and mesenchymal cells of developing hair follicles. In the early stages of hair follicle development (i.e. stages 0-1), it is expressed in both hair placodes and dermal condensations. In stage 2, it is detected in dermal condensations and adjacent epithelia, but not in the upper region of the hair follicles. Expressed at the tip of developing hair follicles in the later stages (i.e. stages 3-5).

It is found in the secreted. The protein resides in the extracellular space. It localises to the extracellular matrix. Its subcellular location is the basement membrane. Extracellular matrix protein that plays a role in epidermal differentiation and is required for epidermal adhesion during embryonic development. This Mus musculus (Mouse) protein is FRAS1-related extracellular matrix protein 1 (Frem1).